The sequence spans 966 residues: uncharacterized protein (966 aa).

The signal sequence occupies residues Met1–Ala24. 6 helical membrane passes run Ile601–Ala621, Leu711–Ile731, Ala743–Phe763, Val785–Val805, Phe822–Phe842, and Gly855–Val875. The tract at residues Thr918 to Lys966 is disordered. Residues Ala926 to Lys966 show a composition bias toward basic and acidic residues.

This sequence belongs to the TrbL/VirB6 family.

The protein localises to the cell membrane. This is an uncharacterized protein from Rickettsia conorii (strain ATCC VR-613 / Malish 7).